Consider the following 464-residue polypeptide: Ubiquinone biosynthesis monooxygenase COQ6, mitochondrial (464 aa).

The N-terminal 24 residues, 1 to 24, are a transit peptide targeting the mitochondrion; that stretch reads MRCLGGSSLSRLLRMLSQSQGRAL.

The protein belongs to the UbiH/COQ6 family. Component of a multi-subunit COQ enzyme complex, composed of at least coq3, coq4, coq5, coq6, coq7 and coq9. Interacts with coq8b and coq7. FAD serves as cofactor.

The protein resides in the mitochondrion inner membrane. The protein localises to the golgi apparatus. It is found in the cell projection. The catalysed reaction is a 4-hydroxy-3-(all-trans-polyprenyl)benzoate + 2 reduced [2Fe-2S]-[ferredoxin] + O2 + 2 H(+) = a 3,4-dihydroxy-5-(all-trans-polyprenyl)benzoate + 2 oxidized [2Fe-2S]-[ferredoxin] + H2O. It catalyses the reaction a 2-methoxy-6-(all-trans-polyprenyl)phenol + 2 reduced [2Fe-2S]-[ferredoxin] + O2 + 2 H(+) = a 2-methoxy-6-(all-trans-polyprenyl)benzene-1,4-diol + 2 oxidized [2Fe-2S]-[ferredoxin] + H2O. Its pathway is cofactor biosynthesis; ubiquinone biosynthesis. In terms of biological role, FAD-dependent monooxygenase required for two non-consecutive steps during ubiquinone biosynthesis. Required for the C5-ring hydroxylation during ubiquinone biosynthesis by catalyzing the hydroxylation of 4-hydroxy-3-(all-trans-polyprenyl)benzoic acid to 3,4-dihydroxy-5-(all-trans-polyprenyl)benzoic acid. Also acts downstream of coq4, for the C1-hydroxylation during ubiquinone biosynthesis by catalyzing the hydroxylation of 2-methoxy-6-(all-trans-polyprenyl)phenol to 2-methoxy-6-(all-trans-polyprenyl)benzene-1,4-diol. The electrons required for the hydroxylation reaction are funneled indirectly to coq6 from NADPH via a ferredoxin/ferredoxin reductase system. In Xenopus tropicalis (Western clawed frog), this protein is Ubiquinone biosynthesis monooxygenase COQ6, mitochondrial.